We begin with the raw amino-acid sequence, 367 residues long: 2-oxoisovalerate dehydrogenase subunit alpha (367 aa).

Substrate contacts are provided by residues Phe-66, Tyr-95, 128-131 (MPEH), and Ser-144. 94–96 (YYR) is a binding site for thiamine diphosphate. Thiamine diphosphate-binding positions include 144 to 146 (SPI), 174 to 180 (GDGATSE), 204 to 208 (NFYAI), and His-273. Mg(2+) is bound by residues Asp-175, Asn-204, and Tyr-206.

It belongs to the BCKDHA family. In terms of assembly, heterotetramer of two alpha and two beta chains. Directly associated with ODBB in the E1 complex. It depends on thiamine diphosphate as a cofactor.

The catalysed reaction is N(6)-[(R)-lipoyl]-L-lysyl-[protein] + 3-methyl-2-oxobutanoate + H(+) = N(6)-[(R)-S(8)-2-methylpropanoyldihydrolipoyl]-L-lysyl-[protein] + CO2. Functionally, the branched-chain alpha-keto dehydrogenase complex catalyzes the overall conversion of alpha-keto acids to acyl-CoA and CO(2). It contains multiple copies of three enzymatic components: branched-chain alpha-keto acid decarboxylase (E1), lipoamide acyltransferase (E2) and lipoamide dehydrogenase (E3). The chain is 2-oxoisovalerate dehydrogenase subunit alpha from Thermus thermophilus (strain ATCC BAA-163 / DSM 7039 / HB27).